The following is a 155-amino-acid chain: Large-conductance mechanosensitive channel (155 aa).

3 helical membrane passes run 16 to 36, 40 to 60, and 88 to 108; these read VVDMAVGIIIGGAFGAIVNNL, VILPPLGLLIGGVDFSSLYII, and GVFLNSVFSFVIMAFAVFLLV.

Belongs to the MscL family. As to quaternary structure, homopentamer.

It localises to the cell inner membrane. Channel that opens in response to stretch forces in the membrane lipid bilayer. May participate in the regulation of osmotic pressure changes within the cell. The sequence is that of Large-conductance mechanosensitive channel from Chlorobium chlorochromatii (strain CaD3).